A 532-amino-acid chain; its full sequence is Metal-staphylopine-binding protein CntA (532 aa).

The N-terminal stretch at 1-20 (MRKLTKMSAMLLASGLILTG) is a signal peptide. The N-palmitoyl cysteine moiety is linked to residue C21. C21 is lipidated: S-diacylglycerol cysteine. The staphylopine site is built by R165, R418, and N448.

Belongs to the bacterial solute-binding protein 5 family. In terms of assembly, the complex is composed of two ATP-binding proteins (CntD and CntF), two transmembrane proteins (CntB and CntC) and a solute-binding protein (CntA).

It localises to the cell membrane. Part of the ABC transporter complex CntABCDF (Opp1) involved in the uptake of metal in complex with the metallophore staphylopine (StP). May be involved in the import of a large array of divalent metals ions such as nickel, cobalt, zinc, copper and iron. Binds the metal via the metallophore StP, and transfers the StP-metal complex to the membrane-bound permease. The protein is Metal-staphylopine-binding protein CntA of Staphylococcus aureus (strain Mu50 / ATCC 700699).